The primary structure comprises 235 residues: Pyridoxine 5'-phosphate synthase (235 aa).

Asn6 is a binding site for 3-amino-2-oxopropyl phosphate. 8 to 9 is a binding site for 1-deoxy-D-xylulose 5-phosphate; the sequence is DH. Arg17 provides a ligand contact to 3-amino-2-oxopropyl phosphate. The Proton acceptor role is filled by His42. Arg44 and His49 together coordinate 1-deoxy-D-xylulose 5-phosphate. Glu69 acts as the Proton acceptor in catalysis. Thr99 serves as a coordination point for 1-deoxy-D-xylulose 5-phosphate. His189 acts as the Proton donor in catalysis. 3-amino-2-oxopropyl phosphate contacts are provided by residues Gly190 and 211–212; that span reads GH.

This sequence belongs to the PNP synthase family. Homooctamer; tetramer of dimers.

Its subcellular location is the cytoplasm. It carries out the reaction 3-amino-2-oxopropyl phosphate + 1-deoxy-D-xylulose 5-phosphate = pyridoxine 5'-phosphate + phosphate + 2 H2O + H(+). It functions in the pathway cofactor biosynthesis; pyridoxine 5'-phosphate biosynthesis; pyridoxine 5'-phosphate from D-erythrose 4-phosphate: step 5/5. Catalyzes the complicated ring closure reaction between the two acyclic compounds 1-deoxy-D-xylulose-5-phosphate (DXP) and 3-amino-2-oxopropyl phosphate (1-amino-acetone-3-phosphate or AAP) to form pyridoxine 5'-phosphate (PNP) and inorganic phosphate. The polypeptide is Pyridoxine 5'-phosphate synthase (Chlorobium chlorochromatii (strain CaD3)).